Here is a 317-residue protein sequence, read N- to C-terminus: tRNA pseudouridine synthase B (317 aa).

Catalysis depends on Asp47, which acts as the Nucleophile.

This sequence belongs to the pseudouridine synthase TruB family. Type 1 subfamily.

It carries out the reaction uridine(55) in tRNA = pseudouridine(55) in tRNA. Functionally, responsible for synthesis of pseudouridine from uracil-55 in the psi GC loop of transfer RNAs. In Shewanella sp. (strain MR-4), this protein is tRNA pseudouridine synthase B.